Here is a 170-residue protein sequence, read N- to C-terminus: ATP synthase subunit b (170 aa).

Residues 11–31 (AFTFGDAFFTLFAFAILLVLI) form a helical membrane-spanning segment.

The protein belongs to the ATPase B chain family. In terms of assembly, F-type ATPases have 2 components, F(1) - the catalytic core - and F(0) - the membrane proton channel. F(1) has five subunits: alpha(3), beta(3), gamma(1), delta(1), epsilon(1). F(0) has three main subunits: a(1), b(2) and c(10-14). The alpha and beta chains form an alternating ring which encloses part of the gamma chain. F(1) is attached to F(0) by a central stalk formed by the gamma and epsilon chains, while a peripheral stalk is formed by the delta and b chains.

The protein localises to the cell membrane. Its function is as follows. F(1)F(0) ATP synthase produces ATP from ADP in the presence of a proton or sodium gradient. F-type ATPases consist of two structural domains, F(1) containing the extramembraneous catalytic core and F(0) containing the membrane proton channel, linked together by a central stalk and a peripheral stalk. During catalysis, ATP synthesis in the catalytic domain of F(1) is coupled via a rotary mechanism of the central stalk subunits to proton translocation. In terms of biological role, component of the F(0) channel, it forms part of the peripheral stalk, linking F(1) to F(0). The sequence is that of ATP synthase subunit b from Listeria monocytogenes serotype 4b (strain F2365).